The sequence spans 119 residues: Ghilanten (119 aa).

A Pyrrolidone carboxylic acid modification is found at glutamine 1. 10 disulfides stabilise this stretch: cysteine 8–cysteine 19, cysteine 13–cysteine 26, cysteine 28–cysteine 48, cysteine 33–cysteine 51, cysteine 37–cysteine 53, cysteine 62–cysteine 73, cysteine 67–cysteine 80, cysteine 82–cysteine 103, cysteine 88–cysteine 106, and cysteine 92–cysteine 108. Residues 28 to 53 enclose the Antistasin-like 1 domain; sequence CPEVRCRVYCSHGFQRSRYGCEVCRC. Positions 83–108 constitute an Antistasin-like 2 domain; it reads KIDINCRKTCPNGLKRDKLGCEYCEC. Heparin contacts are provided by residues 97–100 and 111–118; these read KRDK and KRKLVPRL.

This sequence belongs to the protease inhibitor I15 (antistasin) family.

It localises to the secreted. In terms of biological role, this highly disulfide-bonded protein is a potent inhibitor of factor Xa. May have therapeutic utility as an anticoagulant. Also exhibits a strong metastatic activity. The polypeptide is Ghilanten (Haementeria ghilianii (Amazon leech)).